The following is a 380-amino-acid chain: Magnesium-protoporphyrin IX monomethyl ester [oxidative] cyclase 1 (380 aa).

It belongs to the AcsF family. Requires Fe cation as cofactor.

The enzyme catalyses Mg-protoporphyrin IX 13-monomethyl ester + 3 NADPH + 3 O2 + 2 H(+) = 3,8-divinyl protochlorophyllide a + 3 NADP(+) + 5 H2O. It participates in porphyrin-containing compound metabolism; chlorophyll biosynthesis (light-independent). Its function is as follows. Catalyzes the formation of the isocyclic ring in chlorophyll biosynthesis. Mediates the cyclase reaction, which results in the formation of divinylprotochlorophyllide (Pchlide) characteristic of all chlorophylls from magnesium-protoporphyrin IX 13-monomethyl ester (MgPMME). In Thermosynechococcus vestitus (strain NIES-2133 / IAM M-273 / BP-1), this protein is Magnesium-protoporphyrin IX monomethyl ester [oxidative] cyclase 1.